Here is a 1026-residue protein sequence, read N- to C-terminus: Multidrug resistance protein MdtC (1026 aa).

Transmembrane regions (helical) follow at residues 12–32 (VATT…FSLL), 333–353 (EVEQ…FIFL), 360–380 (LIPA…MYLC), 387–407 (LSLM…IVVL), 431–451 (VGFT…PLLL), 463–483 (FAVT…TLTP), 528–548 (WVLA…VSIP), 853–873 (LLLI…LYES), 897–917 (LFGA…IGIV), 953–973 (PIMM…LTHG), and 984–1004 (ITIV…TPVV).

The protein belongs to the resistance-nodulation-cell division (RND) (TC 2.A.6) family. MdtC subfamily. In terms of assembly, part of a tripartite efflux system composed of MdtA, MdtB and MdtC. MdtC forms a heteromultimer with MdtB.

It is found in the cell inner membrane. This chain is Multidrug resistance protein MdtC, found in Serratia proteamaculans (strain 568).